A 159-amino-acid polypeptide reads, in one-letter code: Odorant-binding protein (159 aa).

The protein belongs to the calycin superfamily. Lipocalin family. Homodimer.

It is found in the secreted. This protein binds a wide variety of chemical odorants. The chain is Odorant-binding protein from Bos taurus (Bovine).